A 317-amino-acid chain; its full sequence is Melanocyte-stimulating hormone receptor (317 aa).

Residues 1–37 (MPVQGSQRRLLGSLNSTPTATPHLGLAANQTGARCLE) are Extracellular-facing. Residue N29 is glycosylated (N-linked (GlcNAc...) asparagine). A helical transmembrane segment spans residues 38-63 (VSIPDGLFLSLGLVSLVENVLVVTAI). Residues 64-72 (AKNRNLHSP) lie on the Cytoplasmic side of the membrane. The chain crosses the membrane as a helical span at residues 73-93 (MYCFICCLALSDLLVSGSNML). Over 94–118 (ETAVILLLEAGALAARAAVVQQLDN) the chain is Extracellular. Residues 119 to 140 (VIDVITCSSMLASLCFLGAIAV) form a helical membrane-spanning segment. At 141–163 (DRYISIFYALRYHSIVTLPRARR) the chain is on the cytoplasmic side. The helical transmembrane segment at 164 to 183 (AVAAIWVASVLFSMLFIAYY) threads the bilayer. The Extracellular portion of the chain corresponds to 184–191 (DHAAVLLC). The chain crosses the membrane as a helical span at residues 192–211 (LVVFFLAMLVLMAVLYIHML). The Cytoplasmic segment spans residues 212 to 240 (ARARQHAQGIARLHKRQCPAHQGFGLKGA). The chain crosses the membrane as a helical span at residues 241–266 (ATLTILLGIFFLCWGPFFLHLTLIVL). Residues 267-279 (CPQHPTCSCIFKN) lie on the Extracellular side of the membrane. The helical transmembrane segment at 280–300 (FNLFLALIICNAIIDPLIYAF) threads the bilayer. At 301 to 317 (RSQELRRTLKEVLLCSW) the chain is on the cytoplasmic side. C315 carries S-palmitoyl cysteine lipidation.

The protein belongs to the G-protein coupled receptor 1 family. Interacts with MGRN1, but does not undergo MGRN1-mediated ubiquitination; this interaction competes with GNAS-binding and thus inhibits agonist-induced cAMP production. Interacts with OPN3; the interaction results in a decrease in MC1R-mediated cAMP signaling and ultimately a decrease in melanin production in melanocytes.

It is found in the cell membrane. In terms of biological role, receptor for MSH (alpha, beta and gamma) and ACTH. The activity of this receptor is mediated by G proteins which activate adenylate cyclase. Mediates melanogenesis, the production of eumelanin (black/brown) and phaeomelanin (red/yellow), via regulation of cAMP signaling in melanocytes. This chain is Melanocyte-stimulating hormone receptor (MC1R), found in Cercopithecus mitis (Blue monkey).